Reading from the N-terminus, the 210-residue chain is ATP-dependent Clp protease proteolytic subunit (210 aa).

Serine 111 functions as the Nucleophile in the catalytic mechanism. Histidine 136 is an active-site residue.

This sequence belongs to the peptidase S14 family. As to quaternary structure, fourteen ClpP subunits assemble into 2 heptameric rings which stack back to back to give a disk-like structure with a central cavity, resembling the structure of eukaryotic proteasomes.

It localises to the cytoplasm. The catalysed reaction is Hydrolysis of proteins to small peptides in the presence of ATP and magnesium. alpha-casein is the usual test substrate. In the absence of ATP, only oligopeptides shorter than five residues are hydrolyzed (such as succinyl-Leu-Tyr-|-NHMec, and Leu-Tyr-Leu-|-Tyr-Trp, in which cleavage of the -Tyr-|-Leu- and -Tyr-|-Trp bonds also occurs).. Its function is as follows. Cleaves peptides in various proteins in a process that requires ATP hydrolysis. Has a chymotrypsin-like activity. Plays a major role in the degradation of misfolded proteins. The chain is ATP-dependent Clp protease proteolytic subunit from Halorhodospira halophila (strain DSM 244 / SL1) (Ectothiorhodospira halophila (strain DSM 244 / SL1)).